We begin with the raw amino-acid sequence, 148 residues long: Leghemoglobin-1 (148 aa).

One can recognise a Globin domain in the interval 2–146 (GFTDKQEALV…LATAIKKAMK (145 aa)). 2 positions are modified to nitrated tyrosine: tyrosine 24 and tyrosine 29. Serine 44 is a binding site for heme b. Serine 44 is modified (phosphoserine). Histidine 61 lines the O2 pocket. Positions 93 and 96 each coordinate heme b. Nitrated tyrosine is present on tyrosine 134.

The protein belongs to the plant globin family. As to quaternary structure, monomer. In terms of processing, nitrated in effective nodules and particularly in hypoxic conditions; this mechanism may play a protective role in the symbiosis by buffering toxic peroxynitrite NO(2)(-). Nitration level decrease during nodule senescence. Phosphorylation at Ser-44 disrupts the molecular environment of its porphyrin ring oxygen binding pocket, thus leading to a reduced oxygen consumption and to the delivery of oxygen O(2) to symbiosomes. In terms of tissue distribution, root nodules.

It localises to the cytoplasm. It is found in the cytosol. Its subcellular location is the nucleus. Its function is as follows. Leghemoglobin that reversibly binds oxygen O(2) through a pentacoordinated heme iron. In root nodules, facilitates the diffusion of oxygen to the bacteroids while preventing the bacterial nitrogenase from being inactivated by buffering dioxygen, nitric oxide and carbon monoxide, and promoting the formation of reactive oxygen species (ROS, e.g. H(2)O(2)). This role is essential for symbiotic nitrogen fixation (SNF). The polypeptide is Leghemoglobin-1 (Pisum sativum (Garden pea)).